The chain runs to 196 residues: Large ribosomal subunit protein uL14my (196 aa).

The N-terminal 62 residues, Met-1–Cys-62, are a transit peptide targeting the mitochondrion. Residues Glu-148–Pro-175 are disordered.

The protein belongs to the universal ribosomal protein uL14 family. In terms of assembly, part of the mitochondrial 50S ribosomal subunit. In terms of tissue distribution, mostly expressed in pistils and inflorescences, including floral organs and meristems, and, to a lower extent, in leaves.

It localises to the mitochondrion. In terms of biological role, binds to 23S rRNA in mitochondrion. Required for the formation of the proximal region of the ovule primordium during floral organogenesis, thus participating in patterning and growth of ovule. Also regulates the initiation and/or maintenance of integument and embryo sac ontogenesis. Prevents inappropriate cell death in the young ovule. The protein is Large ribosomal subunit protein uL14my (HLL) of Arabidopsis thaliana (Mouse-ear cress).